Consider the following 78-residue polypeptide: Conotoxin Cal6.3a (78 aa).

Positions 1–21 (MRFLHFLIVAVLLASFMESGA) are cleaved as a signal peptide. A propeptide spanning residues 22-26 (MPRNP) is cleaved from the precursor. Intrachain disulfides connect Cys-38-Cys-49, Cys-41-Cys-53, and Cys-48-Cys-56. Glutamine amide is present on Gln-76.

In terms of tissue distribution, expressed by the venom duct.

It localises to the secreted. In terms of biological role, probable neurotoxin with unknown target. Possibly targets ion channels. The sequence is that of Conotoxin Cal6.3a from Californiconus californicus (California cone).